The following is a 57-amino-acid chain: Large ribosomal subunit protein bL32 (57 aa).

The span at 1-19 (MAVPKRRMSRSNTRSRRSQ) shows a compositional bias: basic residues. The disordered stretch occupies residues 1–21 (MAVPKRRMSRSNTRSRRSQWK).

Belongs to the bacterial ribosomal protein bL32 family.

This is Large ribosomal subunit protein bL32 from Mycobacteroides abscessus (strain ATCC 19977 / DSM 44196 / CCUG 20993 / CIP 104536 / JCM 13569 / NCTC 13031 / TMC 1543 / L948) (Mycobacterium abscessus).